Consider the following 103-residue polypeptide: Protein E7 (103 aa).

The interval 1 to 45 is E7 terminal domain; it reads MIGKEVTVRDIVLELSEVQPEVLPVDLFCDEELPNEQQAEEELDI. The LXCXE motif; interaction with host RB1 and TMEM173/STING motif lies at 27–31; that stretch reads LFCDE. Residues 56–94 fold into a zinc finger; it reads CGCSCCEVKLRIFVNATNRGIRTFQELLTGDLQLLCPEC. The Nuclear export signal signature appears at 76 to 84; it reads IRTFQELLT.

Belongs to the papillomaviridae E7 protein family. As to quaternary structure, homodimer. Homooligomer. Interacts with host RB1; this interaction induces dissociation of RB1-E2F1 complex thereby disrupting RB1 activity. Interacts with host EP300; this interaction represses EP300 transcriptional activity. Interacts with protein E2; this interaction inhibits E7 oncogenic activity. Interacts with host TMEM173/STING; this interaction impairs the ability of TMEM173/STING to sense cytosolic DNA and promote the production of type I interferon (IFN-alpha and IFN-beta). Highly phosphorylated.

It is found in the host cytoplasm. Its subcellular location is the host nucleus. Functionally, plays a role in viral genome replication by driving entry of quiescent cells into the cell cycle. Stimulation of progression from G1 to S phase allows the virus to efficiently use the cellular DNA replicating machinery to achieve viral genome replication. E7 protein has both transforming and trans-activating activities. Induces the disassembly of the E2F1 transcription factor from RB1, with subsequent transcriptional activation of E2F1-regulated S-phase genes. Interferes with host histone deacetylation mediated by HDAC1 and HDAC2, leading to transcription activation. Also plays a role in the inhibition of both antiviral and antiproliferative functions of host interferon alpha. Interaction with host TMEM173/STING impairs the ability of TMEM173/STING to sense cytosolic DNA and promote the production of type I interferon (IFN-alpha and IFN-beta). The protein is Protein E7 of Homo sapiens (Human).